Reading from the N-terminus, the 179-residue chain is Large ribosomal subunit protein uL6 (179 aa).

It belongs to the universal ribosomal protein uL6 family. Part of the 50S ribosomal subunit.

In terms of biological role, this protein binds to the 23S rRNA, and is important in its secondary structure. It is located near the subunit interface in the base of the L7/L12 stalk, and near the tRNA binding site of the peptidyltransferase center. The protein is Large ribosomal subunit protein uL6 of Synechococcus sp. (strain CC9311).